We begin with the raw amino-acid sequence, 748 residues long: 5-methyltetrahydropteroyltriglutamate--homocysteine methyltransferase (748 aa).

5-methyltetrahydropteroyltri-L-glutamate-binding positions include 18 to 21 (REWK) and K112. L-homocysteine-binding positions include 420–422 (IGS) and E473. Residues 420 to 422 (IGS) and E473 contribute to the L-methionine site. Residue W550 coordinates 5-methyltetrahydropteroyltri-L-glutamate. D588 contributes to the L-homocysteine binding site. Residue D588 coordinates L-methionine. Position 594 (E594) interacts with 5-methyltetrahydropteroyltri-L-glutamate. Zn(2+) contacts are provided by H630, C632, and E654. Catalysis depends on H683, which acts as the Proton donor. C715 is a binding site for Zn(2+).

This sequence belongs to the vitamin-B12 independent methionine synthase family. The cofactor is Zn(2+).

The enzyme catalyses 5-methyltetrahydropteroyltri-L-glutamate + L-homocysteine = tetrahydropteroyltri-L-glutamate + L-methionine. Its pathway is amino-acid biosynthesis; L-methionine biosynthesis via de novo pathway; L-methionine from L-homocysteine (MetE route): step 1/1. Its function is as follows. Catalyzes the transfer of a methyl group from 5-methyltetrahydrofolate to homocysteine resulting in methionine formation. In Staphylococcus epidermidis (strain ATCC 12228 / FDA PCI 1200), this protein is 5-methyltetrahydropteroyltriglutamate--homocysteine methyltransferase.